Consider the following 415-residue polypeptide: F-box protein At3g13820 (415 aa).

Positions 1-50 constitute an F-box domain; sequence MTTMSNLPAEVLEEILSRTPVTSLRTMRSTCKKWNNLSKKKIIPEAARKQ. Disordered stretches follow at residues 209-229 and 387-415; these read NDYDDQEDEEEEDDEEYEDDD and KQPKGKRKGRSSETKSNKNKKGRKIKIIG. A compositionally biased stretch (acidic residues) spans 210-229; that stretch reads DYDDQEDEEEEDDEEYEDDD. A compositionally biased stretch (basic residues) spans 403 to 415; it reads NKNKKGRKIKIIG.

This is F-box protein At3g13820 from Arabidopsis thaliana (Mouse-ear cress).